Here is a 422-residue protein sequence, read N- to C-terminus: Protein FAM53B (422 aa).

A phosphoserine mark is found at serine 118, serine 167, serine 169, serine 179, serine 212, and serine 268. Over residues 245 to 268 (SANSTPASTPELARRSSGLSRSRS) the composition is skewed to low complexity. A disordered region spans residues 245 to 269 (SANSTPASTPELARRSSGLSRSRSQ). Positions 281 to 284 (KRRR) match the Nuclear localization signal motif.

The protein belongs to the FAM53 family. In terms of assembly, interacts with CTNNB1. As to expression, detected in skeletal muscle, kidney, spleen, thyroid, testis, ovary, small intestine, colon and peripheral blood.

Its subcellular location is the nucleus. Acts as a regulator of Wnt signaling pathway by regulating beta-catenin (CTNNB1) nuclear localization. This is Protein FAM53B from Homo sapiens (Human).